The chain runs to 505 residues: MAMASFGQLNLEEPPPIWGSRSVDCFEKLEQIGEGTYGQVYMAKEIKTGEIVALKKIRMDNEREGFPITAIREIKILKKLHHENVIQLKEIVTSPGRDRDDQGKPDNNKYKGGIYMVFEYMDHDLTGLADRPGLRFTVPQIKCYMKQLLTGLHYCHVNQVLHRDIKGSNLLIDNEGNLKLADFGLARSYSHDHTGNLTNRVITLWYRPPELLLGATKYGPAIDMWSVGCIFAELLHAKPILPGKNEQEQLNKIFELCGSPDEKLWPGVSKMPWFNNFKPARPLKRRVREFFRHFDRHALELLEKMLVLDPAQRISAKDALDAEYFWTDPLPCDPKSLPTYESSHEFQTKKKRQQQRQNEEAAKRQKLQHPPLQHSRLPPLQHGGQSHAAPHWPAGPNHPTNNAPPQVPAGPSHNFYGKPRGPPGPNRYPPSGNQSGGYNQSRGGYSSGSYPPQGRGAPYVAGPRGPSGGPYGVGPPNYTQGGQYGGSGSSGRGQNQRNQQYGWQQ.

A Protein kinase domain is found at 26–325 (FEKLEQIGEG…AKDALDAEYF (300 aa)). ATP is bound by residues 32 to 40 (IGEGTYGQV) and lysine 55. Position 37 is a phosphotyrosine (tyrosine 37). The Proton acceptor role is filled by aspartate 164. Residue threonine 198 is modified to Phosphothreonine. The tract at residues 336 to 505 (SLPTYESSHE…QRNQQYGWQQ (170 aa)) is disordered. Residues 429–456 (PPSGNQSGGYNQSRGGYSSGSYPPQGRG) show a composition bias toward low complexity. Residues 482-491 (GQYGGSGSSG) show a composition bias toward gly residues. Over residues 492–505 (RGQNQRNQQYGWQQ) the composition is skewed to low complexity.

The protein belongs to the protein kinase superfamily. CMGC Ser/Thr protein kinase family. CDC2/CDKX subfamily. As to quaternary structure, interacts with CYCT1-3. Highly expressed in flowers. Expressed in seedlings, roots, rosettes and stems.

The enzyme catalyses L-seryl-[protein] + ATP = O-phospho-L-seryl-[protein] + ADP + H(+). It carries out the reaction L-threonyl-[protein] + ATP = O-phospho-L-threonyl-[protein] + ADP + H(+). The catalysed reaction is [DNA-directed RNA polymerase] + ATP = phospho-[DNA-directed RNA polymerase] + ADP + H(+). The chain is Cyclin-dependent kinase C-1 (CDKC-1) from Arabidopsis thaliana (Mouse-ear cress).